Here is a 522-residue protein sequence, read N- to C-terminus: Solute carrier family 2, facilitated glucose transporter member 2 (522 aa).

The Cytoplasmic portion of the chain corresponds to 1–10; the sequence is MSEDKITGTL. Residues 11 to 31 traverse the membrane as a helical segment; that stretch reads AFTVFTAVLGSFQFGYDIGVI. At 32–96 the chain is on the extracellular side; sequence NAPQEVIISH…SAHIVTMLWS (65 aa). Asn62 carries N-linked (GlcNAc...) asparagine glycosylation. The chain crosses the membrane as a helical span at residues 97–117; that stretch reads LSVSSFAVGGMVASFFGGWLG. Over 118–125 the chain is Cytoplasmic; the sequence is DKLGRIKA. Residues 126-146 form a helical membrane-spanning segment; the sequence is MLAANSLSLTGALLMGCSKFG. The Extracellular segment spans residues 147–156; sequence PAHALIIAGR. The helical transmembrane segment at 157 to 177 threads the bilayer; it reads SVSGLYCGLISGLVPMYIGEI. The Cytoplasmic segment spans residues 178 to 185; the sequence is APTTLRGA. The chain crosses the membrane as a helical span at residues 186–206; it reads LGTLHQLALVTGILISQIAGL. Gln191 is a D-glucose binding site. Residues 207–215 lie on the Extracellular side of the membrane; it reads SFILGNQDY. A helical transmembrane segment spans residues 216-236; that stretch reads WHILLGLSAVPALLQCLLLLF. Over 237–301 the chain is Cytoplasmic; the sequence is CPESPRYLYL…LFTDPNYRQP (65 aa). Residues 302–322 traverse the membrane as a helical segment; the sequence is IVVALMLHLAQQFSGINGIFY. D-glucose-binding positions include 312–313 and Asn318; that span reads QQ. At 323–337 the chain is on the extracellular side; that stretch reads YSTSIFQTAGISQPV. Residues 338–358 traverse the membrane as a helical segment; that stretch reads YATIGVGAINMIFTAVSVLLV. Asn347 contributes to the D-glucose binding site. Residues 359 to 365 lie on the Cytoplasmic side of the membrane; that stretch reads EKAGRRT. The helical transmembrane segment at 366–386 threads the bilayer; the sequence is LFLAGMIGMFFCAVFMSLGLV. Topologically, residues 387-401 are extracellular; that stretch reads LLDKFTWMSYVSMTA. The chain crosses the membrane as a helical span at residues 402–422; that stretch reads IFLFVSFFEIGPGPIPWFMVA. D-glucose-binding residues include Glu410 and Trp418. Topologically, residues 423 to 431 are cytoplasmic; it reads EFFSQGPRP. The chain crosses the membrane as a helical span at residues 432–452; the sequence is TALALAAFSNWVCNFIIALCF. Residues 453 to 459 are Extracellular-facing; it reads QYIADFL. Residues 460–480 traverse the membrane as a helical segment; it reads GPYVFFLFAGVVLVFTLFTFF. Topologically, residues 481-522 are cytoplasmic; the sequence is KVPETKGKSFDEIAAEFRKKSGSAPPRKATVQMEFLGSSETV. Phosphothreonine is present on Thr521.

This sequence belongs to the major facilitator superfamily. Sugar transporter (TC 2.A.1.1) family. Glucose transporter subfamily. N-glycosylated; required for stability and retention at the cell surface of pancreatic beta cells. In terms of tissue distribution, present in liver, intestine, kidney and beta-pancreatic islet cells.

The protein resides in the cell membrane. The enzyme catalyses D-glucose(out) = D-glucose(in). It carries out the reaction D-fructose(out) = D-fructose(in). The catalysed reaction is L-dehydroascorbate(out) = L-dehydroascorbate(in). It catalyses the reaction D-galactose(in) = D-galactose(out). D-glucose and maltose competitively inhibit fructose transport. D-glucose, D-fructose and maltose inhibit deoxyglucose transport. In terms of biological role, facilitative hexose transporter that mediates the transport of glucose, fructose and galactose. Likely mediates the bidirectional transfer of glucose across the plasma membrane of hepatocytes and is responsible for uptake of glucose by the beta cells; may comprise part of the glucose-sensing mechanism of the beta cell. May also participate with the Na(+)/glucose cotransporter in the transcellular transport of glucose in the small intestine and kidney. Also able to mediate the transport of dehydroascorbate. The sequence is that of Solute carrier family 2, facilitated glucose transporter member 2 from Rattus norvegicus (Rat).